The following is a 90-amino-acid chain: MNMPGKTPIEKIVSLSAKPFKVSRGSPRDDKERSYENTFRTPIPYNCPDVSTHLSDCPVCSNLYGKEKLLYIFLGAMIVIIFLVIKNQLN.

Residues 69 to 89 (LLYIFLGAMIVIIFLVIKNQL) traverse the membrane as a helical segment.

This sequence belongs to the IIV-6 466R family.

The protein resides in the membrane. This is an uncharacterized protein from Invertebrate iridescent virus 6 (IIV-6).